The primary structure comprises 295 residues: Indole-3-glycerol phosphate synthase (295 aa).

The protein belongs to the TrpC family.

It carries out the reaction 1-(2-carboxyphenylamino)-1-deoxy-D-ribulose 5-phosphate + H(+) = (1S,2R)-1-C-(indol-3-yl)glycerol 3-phosphate + CO2 + H2O. The protein operates within amino-acid biosynthesis; L-tryptophan biosynthesis; L-tryptophan from chorismate: step 4/5. The protein is Indole-3-glycerol phosphate synthase of Prochlorococcus marinus (strain MIT 9515).